Consider the following 293-residue polypeptide: Protein boule-like (293 aa).

Polar residues predominate over residues methionine 1–aspartate 16. The disordered stretch occupies residues methionine 1–tyrosine 39. Phosphoserine is present on residues serine 19, serine 21, and serine 26. The region spanning asparagine 45–arginine 122 is the RRM domain. One can recognise a DAZ domain in the interval proline 172–glutamine 196.

It belongs to the RRM DAZ family. As to quaternary structure, interacts with DAZ1 and DAZL. As to expression, testis specific. Not expressed in early embryos, primoridal germ cells and spermatogonial cells. First expressed in the cytoplasm of spermatocytes and then persists through meiosis.

The protein resides in the cytoplasm. Probable RNA-binding protein, which may be required during spermatogenesis. May act by binding to the 3'-UTR of mRNAs and regulating their translation. This is Protein boule-like from Mus musculus (Mouse).